The primary structure comprises 535 residues: SRMLTDPPRIGSMQSLGSSPTGPLVFVSSSPQLSPFLHPPGHHGLPSQSYYLETSSTPLYRSSVVTNQLSASEEKLCITSNRQQSYAAAGSGVRVFEMANETRYCAVCSDFASGYHYGFWSCEGCKAFFKRSIQGHNDYMCPATNQCTMDRNRRKSCQACRLRKCYEVGMVKGGLRKDRGGRVLRKDKRYCGPAGDREKPYGDLEHRTAPPQDGGRNSSSSSLSGGGGWCGPRITMPPEQVLFLLQGAEPPALCSRQKVARPYTEVTMMTLLTSMADKELVHMIAWAKKVPGFQELSLHDQVQLLESSWLEVLMIGLIWRSIHCPGKLIFAQDLILDRSEGDCVEGMAEIFDMLLATVSRFRMLKLKPEEFVCLKAIILLNSGAFSFCSNSVESLHNSSAVESMLDNITDALIHHISHSGASVQQQPRRQVQLLLLLSHIRHMSNKGMEHLYSIKCKNKVPLYDLLLEMLDGHRLQSPGKVAQAGEQTEGPSTTTTTSTGSSIGPMRGSQDTHIRSPGSGVLQYGSPSSDQMPIP.

The segment at 1–21 (SRMLTDPPRIGSMQSLGSSPT) is disordered. The interval 1-104 (SRMLTDPPRI…VFEMANETRY (104 aa)) is modulating. Residues 12–21 (SMQSLGSSPT) show a composition bias toward polar residues. NR C4-type zinc fingers lie at residues 105 to 125 (CAVC…CEGC) and 141 to 165 (CPAT…LRKC). Residues 105 to 170 (CAVCSDFASG…RLRKCYEVGM (66 aa)) constitute a DNA-binding region (nuclear receptor). Positions 171-236 (VKGGLRKDRG…GGWCGPRITM (66 aa)) are hinge. The segment at 187–229 (DKRYCGPAGDREKPYGDLEHRTAPPQDGGRNSSSSSLSGGGGW) is disordered. Residues 195 to 208 (GDREKPYGDLEHRT) show a composition bias toward basic and acidic residues. Over residues 214-223 (GGRNSSSSSL) the composition is skewed to low complexity. Residues 237–473 (PPEQVLFLLQ…DLLLEMLDGH (237 aa)) enclose the NR LBD domain. The segment at 478–535 (PGKVAQAGEQTEGPSTTTTTSTGSSIGPMRGSQDTHIRSPGSGVLQYGSPSSDQMPIP) is disordered. Low complexity predominate over residues 492-502 (STTTTTSTGSS). The span at 525-535 (GSPSSDQMPIP) shows a compositional bias: polar residues.

The protein belongs to the nuclear hormone receptor family. NR3 subfamily. As to quaternary structure, binds DNA as a homodimer. Can form a heterodimer with ER-beta. As to expression, highest expression in brain and liver.

The protein localises to the nucleus. Its function is as follows. The steroid hormones and their receptors are involved in the regulation of eukaryotic gene expression and affect cellular proliferation and differentiation in target tissues. The protein is Estrogen receptor (esr1) of Salmo salar (Atlantic salmon).